The following is a 418-amino-acid chain: Argininosuccinate synthase (418 aa).

ATP is bound by residues 14 to 22 (AYSGGLDTS) and alanine 42. Positions 94 and 99 each coordinate L-citrulline. Glycine 124 is a binding site for ATP. L-aspartate is bound by residues threonine 126, asparagine 130, and aspartate 131. Position 130 (asparagine 130) interacts with L-citrulline. L-citrulline contacts are provided by arginine 134, serine 183, serine 192, glutamate 273, and tyrosine 285.

The protein belongs to the argininosuccinate synthase family. Type 1 subfamily. In terms of assembly, homotetramer.

The protein localises to the cytoplasm. The enzyme catalyses L-citrulline + L-aspartate + ATP = 2-(N(omega)-L-arginino)succinate + AMP + diphosphate + H(+). It functions in the pathway amino-acid biosynthesis; L-arginine biosynthesis; L-arginine from L-ornithine and carbamoyl phosphate: step 2/3. The protein is Argininosuccinate synthase of Colwellia psychrerythraea (strain 34H / ATCC BAA-681) (Vibrio psychroerythus).